Reading from the N-terminus, the 346-residue chain is Glycerol-3-phosphate dehydrogenase [NAD(P)+] (346 aa).

NADPH-binding residues include serine 15, tryptophan 16, arginine 36, and lysine 110. Positions 110, 139, and 141 each coordinate sn-glycerol 3-phosphate. Alanine 143 contributes to the NADPH binding site. The sn-glycerol 3-phosphate site is built by lysine 194, aspartate 247, serine 257, arginine 258, and asparagine 259. The Proton acceptor role is filled by lysine 194. Arginine 258 contacts NADPH. Positions 282 and 284 each coordinate NADPH.

The protein belongs to the NAD-dependent glycerol-3-phosphate dehydrogenase family.

The protein localises to the cytoplasm. The enzyme catalyses sn-glycerol 3-phosphate + NAD(+) = dihydroxyacetone phosphate + NADH + H(+). It catalyses the reaction sn-glycerol 3-phosphate + NADP(+) = dihydroxyacetone phosphate + NADPH + H(+). Its pathway is membrane lipid metabolism; glycerophospholipid metabolism. Functionally, catalyzes the reduction of the glycolytic intermediate dihydroxyacetone phosphate (DHAP) to sn-glycerol 3-phosphate (G3P), the key precursor for phospholipid synthesis. The chain is Glycerol-3-phosphate dehydrogenase [NAD(P)+] from Xylella fastidiosa (strain M23).